Here is a 498-residue protein sequence, read N- to C-terminus: ATP synthase subunit beta, chloroplastic (498 aa).

Residues 1–14 (MRTNPTTSRPGVST) are compositionally biased toward polar residues. A disordered region spans residues 1–20 (MRTNPTTSRPGVSTSEEKST). 172 to 179 (GGAGVGKT) lines the ATP pocket.

The protein belongs to the ATPase alpha/beta chains family. F-type ATPases have 2 components, CF(1) - the catalytic core - and CF(0) - the membrane proton channel. CF(1) has five subunits: alpha(3), beta(3), gamma(1), delta(1), epsilon(1). CF(0) has four main subunits: a(1), b(1), b'(1) and c(9-12).

The protein localises to the plastid. It is found in the chloroplast thylakoid membrane. The catalysed reaction is ATP + H2O + 4 H(+)(in) = ADP + phosphate + 5 H(+)(out). Its function is as follows. Produces ATP from ADP in the presence of a proton gradient across the membrane. The catalytic sites are hosted primarily by the beta subunits. The sequence is that of ATP synthase subunit beta, chloroplastic from Hordeum vulgare (Barley).